Consider the following 270-residue polypeptide: Putative pyruvate, phosphate dikinase regulatory protein (270 aa).

148-155 (GISRTSKT) serves as a coordination point for ADP.

Belongs to the pyruvate, phosphate/water dikinase regulatory protein family. PDRP subfamily.

The catalysed reaction is N(tele)-phospho-L-histidyl/L-threonyl-[pyruvate, phosphate dikinase] + ADP = N(tele)-phospho-L-histidyl/O-phospho-L-threonyl-[pyruvate, phosphate dikinase] + AMP + H(+). It carries out the reaction N(tele)-phospho-L-histidyl/O-phospho-L-threonyl-[pyruvate, phosphate dikinase] + phosphate + H(+) = N(tele)-phospho-L-histidyl/L-threonyl-[pyruvate, phosphate dikinase] + diphosphate. Its function is as follows. Bifunctional serine/threonine kinase and phosphorylase involved in the regulation of the pyruvate, phosphate dikinase (PPDK) by catalyzing its phosphorylation/dephosphorylation. The protein is Putative pyruvate, phosphate dikinase regulatory protein of Bacillus mycoides (strain KBAB4) (Bacillus weihenstephanensis).